The sequence spans 36 residues: Photosystem I reaction center subunit VIII (36 aa).

Residues 6–26 (LPSIFVPLVGLVFPAIAMASL) form a helical membrane-spanning segment.

Belongs to the PsaI family.

It localises to the plastid. The protein localises to the chloroplast thylakoid membrane. Its function is as follows. May help in the organization of the PsaL subunit. The chain is Photosystem I reaction center subunit VIII from Drimys granadensis.